We begin with the raw amino-acid sequence, 446 residues long: MAQKLWEKNVQVDHEVDIFTVGKDREMDLYLAKYDVLGSMAHITMLESIGLLTKEELNVLLAELRNIYAVADRGEFIIEEGIEDVHSQVELMLTRRLGDMGKKIHSGRSRNDQVLLDLKLFTRSQIQELVELVSGLFDVLISQSNRYKDVLLPGYTHLQVAMPSSFGLWFGAYAESLVDDLQLMQAAYRICNRNPLGSAAGYGSSFPLNRQMTTDLLGFDSLDYNVVYAQMGRGKMERTVAFAMAGIAATLSKLAFDACMFNSQNFGFIKLPDQFTTGSSIMPHKKNPDVFELTRAKCNKLQGLPQQIILISNNLPSGYFRDLQIIKEVFLPAFDELKDCLRMVTHMMREVKVNEHILDDDKYSLLFSVEEVNRRVLAGMPFRDAYKQVGLDIEAGKFIPSKSVNHTHEGSIGNLCNESITAMMRSVIGSFSFERMNEAEKKLIHG.

Belongs to the lyase 1 family. Argininosuccinate lyase subfamily.

Its subcellular location is the cytoplasm. The enzyme catalyses 2-(N(omega)-L-arginino)succinate = fumarate + L-arginine. Its pathway is amino-acid biosynthesis; L-arginine biosynthesis; L-arginine from L-ornithine and carbamoyl phosphate: step 3/3. In Parabacteroides distasonis (strain ATCC 8503 / DSM 20701 / CIP 104284 / JCM 5825 / NCTC 11152), this protein is Argininosuccinate lyase.